The primary structure comprises 906 residues: ATP-dependent DNA helicase DDX11 (906 aa).

Positions 9-442 constitute a Helicase ATP-binding domain; that stretch reads GGIHFPFPFP…KNLMYIKQIL (434 aa). 44–51 contacts ATP; sequence SPTGTGKS. Residues 78–111 form a disordered region; it reads APGSGPPSSEKNSLLTSSSCQEPTDTPRPAGEPD. Positions 85-96 are enriched in low complexity; it reads SSEKNSLLTSSS. Position 260 is a phosphoserine (serine 260). [4Fe-4S] cluster-binding residues include cysteine 265 and cysteine 283. A compositionally biased stretch (basic and acidic residues) spans 284–301; sequence VDMQRSKREKNGTGEDKP. Residues 284–310 are disordered; it reads VDMQRSKREKNGTGEDKPKRKRQKIQT. Residues cysteine 312 and cysteine 347 each contribute to the [4Fe-4S] cluster site. The DEAH box motif lies at 390–393; that stretch reads DEAH.

The protein belongs to the DEAD box helicase family. DEAH subfamily. DDX11/CHL1 sub-subfamily. As to quaternary structure, associates with the CTF18-RFC complex. Associates with a cohesin complex composed of RAD21, SMC1 proteins and SMC3. Interacts with CHTF18. Interacts with DSCC1. Interacts with FEN1; this interaction is direct and increases flap endonuclease activity of FEN1. Interacts with PCNA. Interacts with POLR1A and UBTF. Interacts with RAD21, SMC1 proteins and SMC3. Interacts with RFC2. Interacts with TIMELESS; this interaction increases recruitment of both proteins onto chromatin in response to replication stress induction by hydroxyurea. It depends on [4Fe-4S] cluster as a cofactor.

Its subcellular location is the nucleus. The protein localises to the nucleolus. It localises to the cytoplasm. It is found in the cytoskeleton. The protein resides in the spindle pole. Its subcellular location is the midbody. The protein localises to the microtubule organizing center. It localises to the centrosome. The catalysed reaction is Couples ATP hydrolysis with the unwinding of duplex DNA at the replication fork by translocating in the 5'-3' direction. This creates two antiparallel DNA single strands (ssDNA). The leading ssDNA polymer is the template for DNA polymerase III holoenzyme which synthesizes a continuous strand.. It carries out the reaction ATP + H2O = ADP + phosphate + H(+). DNA-dependent ATPase and ATP-dependent DNA helicase that participates in various functions in genomic stability, including DNA replication, DNA repair and heterochromatin organization as well as in ribosomal RNA synthesis. Its double-stranded DNA helicase activity requires either a minimal 5'-single-stranded tail length of approximately 15 nt (flap substrates) or 10 nt length single-stranded gapped DNA substrates of a partial duplex DNA structure for helicase loading and translocation along DNA in a 5' to 3' direction. The helicase activity is capable of displacing duplex regions up to 100 bp, which can be extended up to 500 bp by the replication protein A (RPA) or the cohesion CTF18-replication factor C (Ctf18-RFC) complex activities. Also shows ATPase- and helicase activities on substrates that mimic key DNA intermediates of replication, repair and homologous recombination reactions, including forked duplex, anti-parallel G-quadruplex and three-stranded D-loop DNA molecules. Plays a role in DNA double-strand break (DSB) repair at the DNA replication fork during DNA replication recovery from DNA damage. Recruited with TIMELESS factor upon DNA-replication stress response at DNA replication fork to preserve replication fork progression, and hence ensure DNA replication fidelity. Also cooperates with TIMELESS factor during DNA replication to regulate proper sister chromatid cohesion and mitotic chromosome segregation. Stimulates 5'-single-stranded DNA flap endonuclease activity of FEN1 in an ATP- and helicase-independent manner; and hence it may contribute in Okazaki fragment processing at DNA replication fork during lagging strand DNA synthesis. Its ability to function at DNA replication fork is modulated by its binding to long non-coding RNA (lncRNA) cohesion regulator non-coding RNA DDX11-AS1/CONCR, which is able to increase both DDX11 ATPase activity and binding to DNA replicating regions. Also plays a role in heterochromatin organization. Involved in rRNA transcription activation through binding to active hypomethylated rDNA gene loci by recruiting UBTF and the RNA polymerase Pol I transcriptional machinery. Plays a role in embryonic development and prevention of aneuploidy. Involved in melanoma cell proliferation and survival. Associates with chromatin at DNA replication fork regions. Binds to single- and double-stranded DNAs. This Mus musculus (Mouse) protein is ATP-dependent DNA helicase DDX11.